A 566-amino-acid polypeptide reads, in one-letter code: Sorting nexin lst-4 (566 aa).

The region spanning 1-61 is the SH3 domain; sequence MAQVKAEYDF…PESYVTPYQA (61 aa). The disordered stretch occupies residues 59–179; the sequence is YQASRPPPVL…DRGSNKVNKN (121 aa). Residues 63–77 are compositionally biased toward pro residues; that stretch reads RPPPVLPPPLPPTSS. Acidic residues predominate over residues 127 to 140; the sequence is DDFDDEWTDEDDEQ. The span at 143–154 shows a compositional bias: polar residues; the sequence is TRPNVQSSIGSN. Over residues 155-173 the composition is skewed to basic and acidic residues; that stretch reads SRRDLSRSHSEHGGPDRGS. The region spanning 227–339 is the PX domain; the sequence is YTCIVDKPKK…HFISCTDEKD (113 aa). Residues 362–566 form the BAR domain; sequence TVPHQPLDPN…KLTSLAARYD (205 aa).

Belongs to the sorting nexin family. Homodimer. Isoform d interacts (via SH3 domain) with dyn-1. In terms of tissue distribution, expressed in vulval precursor cells (VPCs) and apoptotic germ cells. Colocalizes with actin, dyn-1 and rab-5 in early phagosomes.

Its subcellular location is the cytoplasm. It is found in the cytoplasmic vesicle. The protein resides in the phagosome membrane. Involved in the signaling of vulval development by acting as a negative regulator of epidermal growth factor receptor (EGFR) signaling. Aids in phagosomal membrane tubule formation which is required for phagosomal fusion with endosomes and lysosomes. Also recruits rab-7 to phagosomes by an interaction with dyn-1. These are events leading to phagosome maturation which is a step in apoptotic cell corpse clearance. Binds phosphatidylinositol-3,4,5-trisphosphate. The chain is Sorting nexin lst-4 from Caenorhabditis elegans.